A 260-amino-acid polypeptide reads, in one-letter code: Thiazole synthase (260 aa).

Lysine 96 (schiff-base intermediate with DXP) is an active-site residue. Residues glycine 157, 183-184, and 205-206 contribute to the 1-deoxy-D-xylulose 5-phosphate site; these read AG and AS.

The protein belongs to the ThiG family. Homotetramer. Forms heterodimers with either ThiH or ThiS.

The protein localises to the cytoplasm. It catalyses the reaction [ThiS sulfur-carrier protein]-C-terminal-Gly-aminoethanethioate + 2-iminoacetate + 1-deoxy-D-xylulose 5-phosphate = [ThiS sulfur-carrier protein]-C-terminal Gly-Gly + 2-[(2R,5Z)-2-carboxy-4-methylthiazol-5(2H)-ylidene]ethyl phosphate + 2 H2O + H(+). It functions in the pathway cofactor biosynthesis; thiamine diphosphate biosynthesis. In terms of biological role, catalyzes the rearrangement of 1-deoxy-D-xylulose 5-phosphate (DXP) to produce the thiazole phosphate moiety of thiamine. Sulfur is provided by the thiocarboxylate moiety of the carrier protein ThiS. In vitro, sulfur can be provided by H(2)S. This Corynebacterium glutamicum (strain ATCC 13032 / DSM 20300 / JCM 1318 / BCRC 11384 / CCUG 27702 / LMG 3730 / NBRC 12168 / NCIMB 10025 / NRRL B-2784 / 534) protein is Thiazole synthase.